The chain runs to 147 residues: SsrA-binding protein (147 aa).

Residues A119–K147 are disordered. Positions D126–K147 are enriched in basic and acidic residues.

Belongs to the SmpB family.

It is found in the cytoplasm. In terms of biological role, required for rescue of stalled ribosomes mediated by trans-translation. Binds to transfer-messenger RNA (tmRNA), required for stable association of tmRNA with ribosomes. tmRNA and SmpB together mimic tRNA shape, replacing the anticodon stem-loop with SmpB. tmRNA is encoded by the ssrA gene; the 2 termini fold to resemble tRNA(Ala) and it encodes a 'tag peptide', a short internal open reading frame. During trans-translation Ala-aminoacylated tmRNA acts like a tRNA, entering the A-site of stalled ribosomes, displacing the stalled mRNA. The ribosome then switches to translate the ORF on the tmRNA; the nascent peptide is terminated with the 'tag peptide' encoded by the tmRNA and targeted for degradation. The ribosome is freed to recommence translation, which seems to be the essential function of trans-translation. The polypeptide is SsrA-binding protein (Nitrosospira multiformis (strain ATCC 25196 / NCIMB 11849 / C 71)).